The primary structure comprises 159 residues: Aspartate carbamoyltransferase regulatory chain (159 aa).

Residues Cys-113, Cys-118, Cys-143, and Cys-146 each coordinate Zn(2+).

Belongs to the PyrI family. In terms of assembly, contains catalytic and regulatory chains. Zn(2+) serves as cofactor.

Its function is as follows. Involved in allosteric regulation of aspartate carbamoyltransferase. The chain is Aspartate carbamoyltransferase regulatory chain from Methanococcoides burtonii (strain DSM 6242 / NBRC 107633 / OCM 468 / ACE-M).